The following is a 257-amino-acid chain: 5'-nucleotidase SurE (257 aa).

Residues Asp15, Asp16, Ser46, and Asn99 each coordinate a divalent metal cation.

The protein belongs to the SurE nucleotidase family. A divalent metal cation is required as a cofactor.

It localises to the cytoplasm. It catalyses the reaction a ribonucleoside 5'-phosphate + H2O = a ribonucleoside + phosphate. In terms of biological role, nucleotidase that shows phosphatase activity on nucleoside 5'-monophosphates. In Aliivibrio fischeri (strain ATCC 700601 / ES114) (Vibrio fischeri), this protein is 5'-nucleotidase SurE.